The chain runs to 390 residues: Malonyl-CoA-acyl carrier protein transacylase, mitochondrial (390 aa).

A mitochondrion-targeting transit peptide spans 1–21 (MSVRVARVAWVRGLGASYRRG). Residues serine 153 and histidine 270 contribute to the active site. Lysine 314 carries the N6-succinyllysine modification.

It belongs to the type II malonyltransferase family.

Its subcellular location is the mitochondrion. The enzyme catalyses holo-[ACP] + malonyl-CoA = malonyl-[ACP] + CoA. It participates in lipid metabolism; fatty acid biosynthesis. Its function is as follows. Catalyzes the transfer of a malonyl moiety from malonyl-CoA to the free thiol group of the phosphopantetheine arm of the mitochondrial ACP protein (NDUFAB1). This suggests the existence of the biosynthesis of fatty acids in mitochondria. Also acts as a mitochondrial small ribosomal subunit (mt-SSU) assembly factor. This is Malonyl-CoA-acyl carrier protein transacylase, mitochondrial from Homo sapiens (Human).